Consider the following 402-residue polypeptide: Probable cysteine protease ATG4 (402 aa).

The interval 1 to 38 (MTWDTKNQFETTKTSQELPATSQDHISDNKMNSEPSHR) is disordered. C144 functions as the Nucleophile in the catalytic mechanism. Active-site residues include D299 and H301.

This sequence belongs to the peptidase C54 family.

The protein localises to the cytoplasm. Its subcellular location is the nucleus. It is found in the preautophagosomal structure. It catalyses the reaction [protein]-C-terminal L-amino acid-glycyl-phosphatidylethanolamide + H2O = [protein]-C-terminal L-amino acid-glycine + a 1,2-diacyl-sn-glycero-3-phosphoethanolamine. Functionally, cysteine protease that plays a key role in cytoplasm to vacuole transport (Cvt) and autophagy by mediating both proteolytic activation and delipidation of ATG8. Required for selective autophagic degradation of the nucleus (nucleophagy) as well as for mitophagy which contributes to regulate mitochondrial quantity and quality by eliminating the mitochondria to a basal level to fulfill cellular energy requirements and preventing excess ROS production. The protease activity is required for proteolytic activation of ATG8: cleaves the C-terminal amino acid of ATG8 to reveal a C-terminal glycine. ATG8 ubiquitin-like activity requires the exposure of the glycine at the C-terminus for its conjugation to phosphatidylethanolamine (PE) and its insertion to membranes, which is necessary for autophagy. The ATG8-PE conjugate mediates tethering between adjacent membranes and stimulates membrane hemifusion, leading to expansion of the autophagosomal membrane during autophagy. In addition to the protease activity, also catalyzes deconjugation of PE-conjugated forms of ATG8 during macroautophagy: ATG8 delipidation is required to release the protein from membranes, which facilitates multiple events during macroautophagy, and especially for efficient autophagosome biogenesis, the assembly of ATG9-containing tubulovesicular clusters into phagophores/autophagosomes, and for the disassembly of PAS-associated ATG components. ATG8 delipidation by ATG4 also recycles ATG8-PE generated on inappropriate membranes to maintain a reservoir of unlipidated ATG8 that is required for autophagosome formation at the PAS. This Meyerozyma guilliermondii (strain ATCC 6260 / CBS 566 / DSM 6381 / JCM 1539 / NBRC 10279 / NRRL Y-324) (Yeast) protein is Probable cysteine protease ATG4 (ATG4).